The primary structure comprises 940 residues: Valine--tRNA ligase (940 aa).

The 'HIGH' region motif lies at 47–57 (PNVTGILHMGH). The 'KMSKS' region signature appears at 564-568 (KLSKS). K567 contacts ATP. The stretch at 873 to 937 (VEHIAKEKTR…ELQSILDKLA (65 aa)) forms a coiled coil.

This sequence belongs to the class-I aminoacyl-tRNA synthetase family. ValS type 1 subfamily. In terms of assembly, monomer.

The protein localises to the cytoplasm. The enzyme catalyses tRNA(Val) + L-valine + ATP = L-valyl-tRNA(Val) + AMP + diphosphate. Functionally, catalyzes the attachment of valine to tRNA(Val). As ValRS can inadvertently accommodate and process structurally similar amino acids such as threonine, to avoid such errors, it has a 'posttransfer' editing activity that hydrolyzes mischarged Thr-tRNA(Val) in a tRNA-dependent manner. The polypeptide is Valine--tRNA ligase (Chlamydia abortus (strain DSM 27085 / S26/3) (Chlamydophila abortus)).